We begin with the raw amino-acid sequence, 333 residues long: tRNA-dihydrouridine(16) synthase (333 aa).

Residues 19 to 21 (PMQ) and Gln80 each bind FMN. Cys110 (proton donor) is an active-site residue. Residues Lys151, 211–213 (NGD), and 235–236 (GR) contribute to the FMN site.

This sequence belongs to the Dus family. DusC subfamily. FMN is required as a cofactor.

It carries out the reaction 5,6-dihydrouridine(16) in tRNA + NADP(+) = uridine(16) in tRNA + NADPH + H(+). It catalyses the reaction 5,6-dihydrouridine(16) in tRNA + NAD(+) = uridine(16) in tRNA + NADH + H(+). In terms of biological role, catalyzes the synthesis of 5,6-dihydrouridine (D), a modified base found in the D-loop of most tRNAs, via the reduction of the C5-C6 double bond in target uridines. Specifically modifies U16 in tRNAs. In Neisseria meningitidis serogroup A / serotype 4A (strain DSM 15465 / Z2491), this protein is tRNA-dihydrouridine(16) synthase.